Reading from the N-terminus, the 505-residue chain is ATP synthase subunit alpha (505 aa).

Gly-169 to Thr-176 is a binding site for ATP.

The protein belongs to the ATPase alpha/beta chains family. In terms of assembly, F-type ATPases have 2 components, CF(1) - the catalytic core - and CF(0) - the membrane proton channel. CF(1) has five subunits: alpha(3), beta(3), gamma(1), delta(1), epsilon(1). CF(0) has three main subunits: a(1), b(2) and c(9-12). The alpha and beta chains form an alternating ring which encloses part of the gamma chain. CF(1) is attached to CF(0) by a central stalk formed by the gamma and epsilon chains, while a peripheral stalk is formed by the delta and b chains.

The protein localises to the cell membrane. The catalysed reaction is ATP + H2O + 4 H(+)(in) = ADP + phosphate + 5 H(+)(out). Functionally, produces ATP from ADP in the presence of a proton gradient across the membrane. The alpha chain is a regulatory subunit. The protein is ATP synthase subunit alpha of Clostridium acetobutylicum (strain ATCC 824 / DSM 792 / JCM 1419 / IAM 19013 / LMG 5710 / NBRC 13948 / NRRL B-527 / VKM B-1787 / 2291 / W).